The following is a 172-amino-acid chain: R-phycocyanin-2 beta chain (172 aa).

N72 is subject to N4-methylasparagine. C82 lines the (2R,3E)-phycocyanobilin pocket. C153 is a binding site for (2R,3E)-phycoerythrobilin.

It belongs to the phycobiliprotein family. In terms of assembly, heterodimer of an alpha and a beta chain. In terms of processing, contains two covalently linked bilin chromophores.

The protein resides in the cellular thylakoid membrane. Functionally, light-harvesting photosynthetic bile pigment-protein from the phycobiliprotein complex. The chain is R-phycocyanin-2 beta chain (rpcB) from Synechococcus sp. (strain WH8103).